We begin with the raw amino-acid sequence, 272 residues long: Large ribosomal subunit protein uL3 (272 aa).

Residues 125–146 (QHIGPKSHGGGGGSQPLRQTGS) are disordered.

The protein belongs to the universal ribosomal protein uL3 family. Part of the 50S ribosomal subunit. Forms a cluster with proteins L14 and L19.

One of the primary rRNA binding proteins, it binds directly near the 3'-end of the 23S rRNA, where it nucleates assembly of the 50S subunit. This is Large ribosomal subunit protein uL3 from Metamycoplasma arthritidis (strain 158L3-1) (Mycoplasma arthritidis).